We begin with the raw amino-acid sequence, 209 residues long: Regulator of G-protein signaling 1 (209 aa).

Positions 18–42 (FFSASPKDSKEPSHSLLDDNKQKKR) are disordered. Positions 24-38 (KDSKEPSHSLLDDNK) are enriched in basic and acidic residues. The RGS domain maps to 85-200 (SLEKLLANQM…LKSNIYLNLL (116 aa)).

Interacts with GNAI1 and GNAQ. Expressed in multiple tissues.

The protein resides in the cell membrane. The protein localises to the cytoplasm. It is found in the cytosol. In terms of biological role, regulates G protein-coupled receptor signaling cascades, including signaling downstream of the N-formylpeptide chemoattractant receptors and leukotriene receptors. Inhibits B cell chemotaxis toward CXCL12. Inhibits signal transduction by increasing the GTPase activity of G protein alpha subunits, thereby driving them into their inactive GDP-bound form. In Rattus norvegicus (Rat), this protein is Regulator of G-protein signaling 1 (Rgs1).